The chain runs to 296 residues: Transcription factor MYB72 (296 aa).

HTH myb-type domains follow at residues 11-63 and 64-118; these read KNKV…INYL and RPDV…KKRL. DNA-binding regions (H-T-H motif) lie at residues 39–63 and 91–114; these read WRSL…INYL and WSKI…NTHL. A disordered region spans residues 118–144; sequence LTPSSSSSSLSSTHDQSTKADHDKNCD. Basic and acidic residues predominate over residues 133 to 144; it reads QSTKADHDKNCD.

As to quaternary structure, interacts with EIL3.

Its subcellular location is the nucleus. In terms of biological role, involved in metal ions homeostasis, including iron ions (Fe) acquisition, via the regulation of NAS4 and NAS2 genes expression. Necessary for plant survival in alkaline soil where iron availability is greatly restricted. Involved in the up-regulation of several biosynthesis genes of secondary metabolites involved in iron uptake under conditions of iron deficiency. Triggers tolerance to nickel (Ni) and zinc (Zn) ions. Required in the roots during early signaling steps of rhizobacteria-mediated (e.g. P.fluorescens WCS417r) and beneficial fungi-mediated (e.g. T.asperellum T34) broad-spectrum induced systemic resistance (ISR) against several pathogens (e.g. P.syringae pv tomato, H.parasitica, P.cucumerina, A.brassicicola and B.cinerea) and implying enhanced callose deposition. Required for the induction of some genes (e.g. BGLU42) upon rhizobacteria-mediated ISR. The chain is Transcription factor MYB72 from Arabidopsis thaliana (Mouse-ear cress).